The primary structure comprises 468 residues: Bifunctional protein HldE (468 aa).

The tract at residues 1-315 (MAKKVEILVV…ELLRSRANAE (315 aa)) is ribokinase. Residue 192–195 (NRKE) coordinates ATP. The active site involves aspartate 260. A cytidylyltransferase region spans residues 340–468 (FTNGCFDILH…IVKRIKDADK (129 aa)).

The protein in the N-terminal section; belongs to the carbohydrate kinase PfkB family. It in the C-terminal section; belongs to the cytidylyltransferase family. As to quaternary structure, homodimer.

The enzyme catalyses D-glycero-beta-D-manno-heptose 7-phosphate + ATP = D-glycero-beta-D-manno-heptose 1,7-bisphosphate + ADP + H(+). It carries out the reaction D-glycero-beta-D-manno-heptose 1-phosphate + ATP + H(+) = ADP-D-glycero-beta-D-manno-heptose + diphosphate. It functions in the pathway nucleotide-sugar biosynthesis; ADP-L-glycero-beta-D-manno-heptose biosynthesis; ADP-L-glycero-beta-D-manno-heptose from D-glycero-beta-D-manno-heptose 7-phosphate: step 1/4. Its pathway is nucleotide-sugar biosynthesis; ADP-L-glycero-beta-D-manno-heptose biosynthesis; ADP-L-glycero-beta-D-manno-heptose from D-glycero-beta-D-manno-heptose 7-phosphate: step 3/4. In terms of biological role, catalyzes the phosphorylation of D-glycero-D-manno-heptose 7-phosphate at the C-1 position to selectively form D-glycero-beta-D-manno-heptose-1,7-bisphosphate. Functionally, catalyzes the ADP transfer from ATP to D-glycero-beta-D-manno-heptose 1-phosphate, yielding ADP-D-glycero-beta-D-manno-heptose. The chain is Bifunctional protein HldE from Campylobacter curvus (strain 525.92).